The chain runs to 463 residues: Stress-activated protein kinase jnk-1 (463 aa).

A compositionally biased stretch (polar residues) spans 1 to 12; sequence MEERLSTTSSYP. Residues 1–23 are disordered; sequence MEERLSTTSSYPSHPGRSVEEDH. The region spanning 119–412 is the Protein kinase domain; it reads YQNLRLIGSG…ISVDDALRHP (294 aa). ATP contacts are provided by residues 126-131 and Lys-148; that span reads GSGAQG. Asp-244 functions as the Proton acceptor in the catalytic mechanism. Phosphothreonine is present on Thr-276. The TXY signature appears at 276-278; it reads TPY. Tyr-278 bears the Phosphotyrosine mark.

This sequence belongs to the protein kinase superfamily. CMGC Ser/Thr protein kinase family. MAP kinase subfamily. Binds to the scaffolding protein, unc-16. Unc-16 also binds other components of the JNK signaling pathway. Interacts with daf-16. Mg(2+) serves as cofactor. In terms of processing, dually phosphorylated on Thr-276 and Tyr-278, which activates the enzyme. In terms of tissue distribution, expressed in most neurons, including nerve ring, head ganglions, dorsal and ventral nerve cords and tail ganglions. The Thr-276/Tyr-278 phosphorylated form is present in the nerve ring upon heat exposure.

It localises to the cytoplasm. Its subcellular location is the perikaryon. The protein resides in the cell projection. It is found in the axon. It catalyses the reaction L-seryl-[protein] + ATP = O-phospho-L-seryl-[protein] + ADP + H(+). It carries out the reaction L-threonyl-[protein] + ATP = O-phospho-L-threonyl-[protein] + ADP + H(+). Activated by threonine and tyrosine phosphorylation by either of the dual specificity kinases, jkk-1 and mek-1. Serine/threonine-protein kinase which responds to activation by environmental stress by phosphorylating a number of transcription factors such as daf-16, and thus regulates transcriptional activity. By phosphorylating daf-16, plays a role in daf-16 nuclear translocation in intestinal cells in response to environmental stresses such as heat and oxidative stresses. Downstream of jkk-1, may coordinate locomotion via type-D GABAergic motoneurons and regulates synaptic vesicle transport in conjunction with unc-16. Independently of jkk-1, may regulate some mechanosensory responses, such as response to touch. Independently of jkk-1 and downstream of mek-1, plays a role in resistance to heavy metals, such as Cu(2+) or Cd(2+). Regulates germline cell apoptosis in response to heavy metals such as Cu(2+) and arsenite. Required for dopaminergic CEP neuron degeneration in response to Mn(2+). Required for normal sleep bout quantity and arousal thresholds during the transition from the last larval stage to adulthood in well-fed animals. Downstream of jkk-1 but independently of mek-1, positively regulates lifespan. In Caenorhabditis elegans, this protein is Stress-activated protein kinase jnk-1 (jnk-1).